Consider the following 558-residue polypeptide: CTP synthase (558 aa).

An amidoligase domain region spans residues 1 to 267; the sequence is MAKFVFVTGG…CLEMLDVLNL (267 aa). Position 13 (S13) interacts with CTP. S13 contacts UTP. Residues 14-19 and D71 each bind ATP; that span reads SIGKGI. Mg(2+) is bound by residues D71 and E141. CTP is bound by residues 148–150, 188–193, and K224; these read DIE and KTKPTQ. Residues 188–193 and K224 contribute to the UTP site; that span reads KTKPTQ. The region spanning 292 to 534 is the Glutamine amidotransferase type-1 domain; it reads KVALVGKYVQ…IEAAQLRLPA (243 aa). Residue G354 participates in L-glutamine binding. C381 functions as the Nucleophile; for glutamine hydrolysis in the catalytic mechanism. Residues 382 to 385, E405, and R462 each bind L-glutamine; that span reads LGMQ. Catalysis depends on residues H507 and E509. Residues 536–558 form a disordered region; the sequence is PDEALRRQSQTNISAQEKPSRIG. The segment covering 542-552 has biased composition (polar residues); it reads RQSQTNISAQE.

It belongs to the CTP synthase family. As to quaternary structure, homotetramer.

It carries out the reaction UTP + L-glutamine + ATP + H2O = CTP + L-glutamate + ADP + phosphate + 2 H(+). The catalysed reaction is L-glutamine + H2O = L-glutamate + NH4(+). It catalyses the reaction UTP + NH4(+) + ATP = CTP + ADP + phosphate + 2 H(+). Its pathway is pyrimidine metabolism; CTP biosynthesis via de novo pathway; CTP from UDP: step 2/2. Its activity is regulated as follows. Allosterically activated by GTP, when glutamine is the substrate; GTP has no effect on the reaction when ammonia is the substrate. The allosteric effector GTP functions by stabilizing the protein conformation that binds the tetrahedral intermediate(s) formed during glutamine hydrolysis. Inhibited by the product CTP, via allosteric rather than competitive inhibition. Functionally, catalyzes the ATP-dependent amination of UTP to CTP with either L-glutamine or ammonia as the source of nitrogen. Regulates intracellular CTP levels through interactions with the four ribonucleotide triphosphates. The chain is CTP synthase from Prochlorococcus marinus (strain MIT 9303).